Here is a 56-residue protein sequence, read N- to C-terminus: Small ribosomal subunit protein uS14z/uS14y/uS14x (56 aa).

The Zn(2+) site is built by cysteine 21, cysteine 24, cysteine 39, and cysteine 42.

The protein belongs to the universal ribosomal protein uS14 family. Zn(2+) is required as a cofactor.

In Arabidopsis thaliana (Mouse-ear cress), this protein is Small ribosomal subunit protein uS14z/uS14y/uS14x (RPS29A).